The sequence spans 499 residues: Transcriptional regulator sdnM (499 aa).

Its subcellular location is the nucleus. It functions in the pathway antibiotic biosynthesis. Transcriptional regulator; part of the gene cluster that mediates the biosynthesis of sordarin and hypoxysordarin, glycoside antibiotics with a unique tetracyclic diterpene aglycone structure. First, the geranylgeranyl diphosphate synthase sdnC constructs GGDP from farnesyl diphosphate and isopentenyl diphosphate. The diterpene cyclase sdnA then catalyzes the cyclization of GGDP to afford cycloaraneosene. Cycloaraneosene is then hydroxylated four times by the putative cytochrome P450 monooxygenases sdnB, sdnE, sdnF and sdnH to give a hydroxylated cycloaraneosene derivative such as cycloaraneosene-8,9,13,19-tetraol. Although the order of the hydroxylations is unclear, at least C8, C9 and C13 of the cycloaraneosene skeleton are hydroxylated before the sordaricin formation. Dehydration of the 13-hydroxy group of the hydroxylated cycloaraneosene derivative might be catalyzed by an unassigned hypothetical protein such as sdnG and sdnP to construct the cyclopentadiene moiety. The FAD-dependent oxidoreductase sdnN is proposed to catalyze the oxidation at C9 of the hydroxylated cycloaraneosene derivative and also catalyze the Baeyer-Villiger oxidation to give the lactone intermediate. The presumed lactone intermediate would be hydrolyzed to give an acrolein moiety and a carboxylate moiety. Then, [4+2]cycloaddition would occur between the acrolein moiety and the cyclopentadiene moiety to give sordaricin. SdnN might also be involved in the [4+2]cycloaddition after the hypothesized oxidation to accommodate the oxidized product and prompt the [4+2]cycloaddition. GDP-6-deoxy-D-altrose may be biosynthesized from GDP-D-mannose by the putative GDP-mannose-4,6-dehydratase sdnI and the short-chain dehydrogenase sdnK. The glycosyltransferase sdnJ catalyzes the attachment of 6-deoxy-D-altrose onto the 19-hydroxy group of sordaricin to give 4'-O-demethylsordarin. The methyltransferase sdnD would complete the biosynthesis of sordarin. Sordarin can be further modified into hypoxysordarin. The unique acyl chain at the 3'-hydroxy group of hypoxysordarin would be constructed by an iterative type I PKS sdnO and the trans-acting polyketide methyltransferase sdnL. SdnL would be responsible for the introduction of an alpha-methyl group of the polyketide chain. Alternatively, the beta-lactamase-like protein sdnR might be responsible for the cleavage and transfer of the polyketide chain from the PKS sdnO to sordarin. Two putative cytochrome P450 monooxygenases, sdnQ and sdnT, might catalyze the epoxidations of the polyketide chain to complete the biosynthesis of hypoxysordarin. Transcriptional regulators sdnM and sdnS are presumably encoded for the transcriptional regulation of the expression of the sdn gene cluster. This is Transcriptional regulator sdnM from Sordaria araneosa (Pleurage araneosa).